The primary structure comprises 357 residues: Uroporphyrinogen decarboxylase (357 aa).

Residues 30 to 34, aspartate 79, tyrosine 154, serine 209, and histidine 336 each bind substrate; that span reads RQAGR.

The protein belongs to the uroporphyrinogen decarboxylase family. As to quaternary structure, homodimer.

Its subcellular location is the cytoplasm. It carries out the reaction uroporphyrinogen III + 4 H(+) = coproporphyrinogen III + 4 CO2. Its pathway is porphyrin-containing compound metabolism; protoporphyrin-IX biosynthesis; coproporphyrinogen-III from 5-aminolevulinate: step 4/4. Its function is as follows. Catalyzes the decarboxylation of four acetate groups of uroporphyrinogen-III to yield coproporphyrinogen-III. The protein is Uroporphyrinogen decarboxylase of Mycobacterium leprae (strain Br4923).